We begin with the raw amino-acid sequence, 378 residues long: Chaperone protein DnaJ (378 aa).

Residues 5-70 enclose the J domain; that stretch reads DFYEVLGLSK…QKRAAYDQYG (66 aa). The segment at 133 to 211 adopts a CR-type zinc-finger fold; it reads GITKEIRIPT…CHGDGRVERY (79 aa). The Zn(2+) site is built by cysteine 146, cysteine 149, cysteine 163, cysteine 166, cysteine 185, cysteine 188, cysteine 199, and cysteine 202. CXXCXGXG motif repeat units lie at residues 146 to 153, 163 to 170, 185 to 192, and 199 to 206; these read CDKCHGSG, CSTCHGAG, CPTCHGRG, and CSKCHGDG.

The protein belongs to the DnaJ family. In terms of assembly, homodimer. Zn(2+) serves as cofactor.

It localises to the cytoplasm. Participates actively in the response to hyperosmotic and heat shock by preventing the aggregation of stress-denatured proteins and by disaggregating proteins, also in an autonomous, DnaK-independent fashion. Unfolded proteins bind initially to DnaJ; upon interaction with the DnaJ-bound protein, DnaK hydrolyzes its bound ATP, resulting in the formation of a stable complex. GrpE releases ADP from DnaK; ATP binding to DnaK triggers the release of the substrate protein, thus completing the reaction cycle. Several rounds of ATP-dependent interactions between DnaJ, DnaK and GrpE are required for fully efficient folding. Also involved, together with DnaK and GrpE, in the DNA replication of plasmids through activation of initiation proteins. In Proteus mirabilis (strain HI4320), this protein is Chaperone protein DnaJ.